The primary structure comprises 350 residues: MDFELEPSLEELIKQDTLKWIFVGGKGGVGKTTTSSSIAVQLALQHPNDEFLLISTDPAHNLSDAFCQKFGKDARKVEGLSNLSCMEIDPEAAMSDLQQQAQQYNNDPNDPLKSIMNDMTGSIPGIDEALSFMEVLKHIKNQKVNESDDSKDKISYRTIIFDTAPTGHTLRFLQLPSTLQKLLGKFQQLSGKLGPMMSMLGGGGQGQQDMFAKLNEVQKNVEEVNEQFTNPDLTTFVCVCISEFLSLYETERMIQELMSYQMDVNSIVVNQLLFADDDENPCKRCVARWKMQKKYLDQMAELYEDYHLVKMPLLGSEIRGVENLKKFSKFLIKPYDPKVDRGIITDLKEQ.

An ATP-binding site is contributed by 26–33; the sequence is KGGVGKTT. Asp-57 is an active-site residue. ATP contacts are provided by Glu-243 and Asn-270. Positions 282 and 285 each coordinate Zn(2+).

It belongs to the arsA ATPase family. Homodimer. Component of the Golgi to ER traffic (GET) complex, which is composed of GET1, GET2 and GET3. Within the complex, GET1 and GET2 form a heterotetramer which is stabilized by phosphatidylinositol binding and which binds to the GET3 homodimer. Interacts with the chloride channel protein GEF1.

It is found in the cytoplasm. Its subcellular location is the endoplasmic reticulum. The protein localises to the golgi apparatus. Its function is as follows. ATPase required for the post-translational delivery of tail-anchored (TA) proteins to the endoplasmic reticulum. Recognizes and selectively binds the transmembrane domain of TA proteins in the cytosol. This complex then targets to the endoplasmic reticulum by membrane-bound receptors GET1 and GET2, where the tail-anchored protein is released for insertion. This process is regulated by ATP binding and hydrolysis. ATP binding drives the homodimer towards the closed dimer state, facilitating recognition of newly synthesized TA membrane proteins. ATP hydrolysis is required for insertion. Subsequently, the homodimer reverts towards the open dimer state, lowering its affinity for the GET1-GET2 receptor, and returning it to the cytosol to initiate a new round of targeting. Cooperates with the HDEL receptor ERD2 to mediate the ATP-dependent retrieval of resident ER proteins that contain a C-terminal H-D-E-L retention signal from the Golgi to the ER. Involved in low-level resistance to the oxyanions arsenite and arsenate, and in heat tolerance. This is ATPase GET3 from Candida albicans (strain SC5314 / ATCC MYA-2876) (Yeast).